The following is a 393-amino-acid chain: NADH-quinone oxidoreductase subunit D 2 (393 aa).

It belongs to the complex I 49 kDa subunit family. In terms of assembly, NDH-1 is composed of 14 different subunits. Subunits NuoB, C, D, E, F, and G constitute the peripheral sector of the complex.

It is found in the cell inner membrane. The catalysed reaction is a quinone + NADH + 5 H(+)(in) = a quinol + NAD(+) + 4 H(+)(out). Functionally, NDH-1 shuttles electrons from NADH, via FMN and iron-sulfur (Fe-S) centers, to quinones in the respiratory chain. The immediate electron acceptor for the enzyme in this species is believed to be a menaquinone. Couples the redox reaction to proton translocation (for every two electrons transferred, four hydrogen ions are translocated across the cytoplasmic membrane), and thus conserves the redox energy in a proton gradient. In Cytophaga hutchinsonii (strain ATCC 33406 / DSM 1761 / CIP 103989 / NBRC 15051 / NCIMB 9469 / D465), this protein is NADH-quinone oxidoreductase subunit D 2.